The following is a 485-amino-acid chain: Alpha-amylase (485 aa).

The signal sequence occupies residues 1–18 (MQHLSILLVVLGSSIAFA). A Pyrrolidone carboxylic acid modification is found at Gln19. A disulfide bridge connects residues Cys46 and Cys102. Residues Asn116, Arg163, and Asp172 each coordinate Ca(2+). A disulfide bridge links Cys152 with Cys165. Residue Arg200 coordinates chloride. Asp202 serves as the catalytic Nucleophile. Residue His206 participates in Ca(2+) binding. The Proton donor role is filled by Glu238. Asn301 is a binding site for chloride. The cysteines at positions 369 and 375 are disulfide-linked. N-linked (GlcNAc...) asparagine glycans are attached at residues Asn423 and Asn449. Residues Cys440 and Cys452 are joined by a disulfide bond.

Belongs to the glycosyl hydrolase 13 family. In terms of assembly, monomer. The cofactor is Ca(2+). Chloride is required as a cofactor.

It carries out the reaction Endohydrolysis of (1-&gt;4)-alpha-D-glucosidic linkages in polysaccharides containing three or more (1-&gt;4)-alpha-linked D-glucose units.. In terms of biological role, involved in the digestion of starch. The polypeptide is Alpha-amylase (Hypothenemus hampei (Coffee berry borer)).